The primary structure comprises 108 residues: uncharacterized protein (108 aa).

3 helical membrane passes run 26–46 (GAVYTGEFTLYLLFIFGALII), 54–74 (LMTLFGLAALAFSLSVSPLIF), and 84–104 (INYQLFWLSIFLGAIAFCIYM).

The protein resides in the cell membrane. This is an uncharacterized protein from Methanocaldococcus jannaschii (strain ATCC 43067 / DSM 2661 / JAL-1 / JCM 10045 / NBRC 100440) (Methanococcus jannaschii).